The following is a 316-amino-acid chain: Polyprenyl transferase dpchC (316 aa).

Helical transmembrane passes span 24–44 (PLFTTFAGLWSTLLAGGAKMA), 60–80 (ALCFVASYLFCGAGMVWNDWI), 105–125 (EAMVWMVLQAALSWGVLEVML), 154–174 (MLGIYPQYILAFTIAWPAVIG), 192–212 (CLPLCTMVFFWTIYLNTAYSY), 234–254 (IHLLLVALVSPILVCLPIYLF), 258–278 (SLWLWLSWMGVWTASLAQQLV), and 296–316 (FILGIWTILACVVQVFLTGSA).

It belongs to the UbiA prenyltransferase family. The cofactor is Mg(2+).

The protein resides in the membrane. Its pathway is secondary metabolite biosynthesis; terpenoid biosynthesis. Its function is as follows. Polyprenyl transferase; part of the gene cluster that mediates the biosynthesis of the diterpenoid pyrones higginsianins A and B. The first step of the pathway is the synthesis of the alpha-pyrone moiety by the polyketide synthase dpchA via condensation of one acetyl-CoA starter unit with 3 malonyl-CoA units and 2 methylations. The alpha-pyrone is then combined with geranylgeranyl pyrophosphate (GGPP) formed by the GGPP synthase dpchD through the action of the prenyltransferase dpchC to yield a linear alpha-pyrone diterpenoid. Subsequent steps in the diterpenoid pyrone biosynthetic pathway involve the decalin core formation, which is initiated by the epoxidation of the C10-C11 olefin by the FAD-dependent oxidoreductase dpchE, and is followed by a cyclization cascade catalyzed by the terpene cyclase dpchB. The short chain dehydrogenase/reductase dpchG then oxidizes the 8S hydroxy group to a ketone and the short chain dehydrogenase/reductase dpchH reduces the ketone to the 8R hydroxy group to yield higginsianin B. Finally, the FAD-dependent oxidoreductase dpchF converts higginsianin B into higginsianin A. The chain is Polyprenyl transferase dpchC from Colletotrichum higginsianum (strain IMI 349063) (Crucifer anthracnose fungus).